Here is a 404-residue protein sequence, read N- to C-terminus: uncharacterized protein (404 aa).

8 helical membrane-spanning segments follow: residues M1–S21, V32–G52, A89–Y109, L182–A202, L261–F281, G285–V305, A344–L364, and K384–I404.

It belongs to the concentrative nucleoside transporter (CNT) (TC 2.A.41) family.

The protein resides in the cell membrane. This is an uncharacterized protein from Bacillus subtilis (strain 168).